The primary structure comprises 638 residues: 1-deoxy-D-xylulose-5-phosphate synthase (638 aa).

Residues histidine 79 and 120–122 (AHS) contribute to the thiamine diphosphate site. Aspartate 151 serves as a coordination point for Mg(2+). Thiamine diphosphate contacts are provided by residues 152–153 (GA), asparagine 180, tyrosine 289, and glutamate 371. Residue asparagine 180 coordinates Mg(2+).

This sequence belongs to the transketolase family. DXPS subfamily. Homodimer. Mg(2+) is required as a cofactor. Thiamine diphosphate serves as cofactor.

The catalysed reaction is D-glyceraldehyde 3-phosphate + pyruvate + H(+) = 1-deoxy-D-xylulose 5-phosphate + CO2. The protein operates within metabolic intermediate biosynthesis; 1-deoxy-D-xylulose 5-phosphate biosynthesis; 1-deoxy-D-xylulose 5-phosphate from D-glyceraldehyde 3-phosphate and pyruvate: step 1/1. Functionally, catalyzes the acyloin condensation reaction between C atoms 2 and 3 of pyruvate and glyceraldehyde 3-phosphate to yield 1-deoxy-D-xylulose-5-phosphate (DXP). This Rhizobium etli (strain CIAT 652) protein is 1-deoxy-D-xylulose-5-phosphate synthase.